The sequence spans 798 residues: Probable DEAD-box ATP-dependent RNA helicase 48 (798 aa).

Disordered stretches follow at residues 76–100 (KMWGNPDSGEKTAKSKQSHGPMSPK), 117–148 (DFWNENDGPVKKSDQGSRSGSDSIDSTSNSPI), and 236–257 (FRKNDSSTEEDSDEEGDEGKMI). Over residues 132-148 (GSRSGSDSIDSTSNSPI) the composition is skewed to low complexity. Acidic residues predominate over residues 242–252 (STEEDSDEEGD). Positions 328 to 356 (KRFDESCISPLTLKALSASGILKMTRVQD) match the Q motif motif. Residues 359-543 (LSECLDGKDA…QLVLKRDHSY (185 aa)) form the Helicase ATP-binding domain. 372 to 379 (AKTGTGKS) serves as a coordination point for ATP. A DEAD box motif is present at residues 491 to 494 (DEAD). The Helicase C-terminal domain occupies 577-726 (LLKEHINNTP…SIVKHQVDQS (150 aa)).

This sequence belongs to the DEAD box helicase family.

The enzyme catalyses ATP + H2O = ADP + phosphate + H(+). The polypeptide is Probable DEAD-box ATP-dependent RNA helicase 48 (RH48) (Arabidopsis thaliana (Mouse-ear cress)).